A 491-amino-acid chain; its full sequence is MDSAVAGAADIGRYGRRIVRMIWDPEPTNDPIANRPAWCLGYEYTLETNITSKTKGEDSKLSTATSSDQQRPPAQANKVPQMPSAQLPTEAAATALSGNTTPPTPEAALEPTKITSQPAAIDTPPDSVDSSFDSSMAYDDVPDDGGWPPAFLNDFESRIWMTYRSGFEPIPRSTDPTASSRMSFAMRLKTMADQQAGFTTDSGWGCMIRTGQSLLANSLLTCRLGRSWRRGQAPDEERKLLSLFADDPRAPYSIHNFVAHGAAKCGKYPGEWFGPSATARCIHALANATENSFRVYSTGDLPDVYEDSFMEVAKPDGKTFHPTLILISTRLGIDKINQVYWESLTATLQLPQSVGIAGGRPSSSHYFVGAQRSDEDQGSYLFYLDPHHTRPALPFHEDPQLYTPSDVDSCHTRRLRRLHIREMDPSMLIGFLILDEENWHAWKSSVKHVQGKSIITVSEHDPSKGSASGRPSAIDEVETLSDDDGDTVLDG.

The disordered stretch occupies residues Lys53–Ala137. Residues Leu61–Pro72 are compositionally biased toward polar residues. The span at Asp126–Ser135 shows a compositional bias: low complexity. Residue Cys206 is the Nucleophile of the active site. Active-site residues include Asp385 and His387. A disordered region spans residues Val457–Gly491. Over residues Asp475–Gly491 the composition is skewed to acidic residues.

The protein belongs to the peptidase C54 family. Interacts with ATG8.

It localises to the cytoplasm. The protein resides in the nucleus. Its subcellular location is the preautophagosomal structure. The catalysed reaction is [protein]-C-terminal L-amino acid-glycyl-phosphatidylethanolamide + H2O = [protein]-C-terminal L-amino acid-glycine + a 1,2-diacyl-sn-glycero-3-phosphoethanolamine. In terms of biological role, cysteine protease that plays a key role in cytoplasm to vacuole transport (Cvt) and autophagy by mediating both proteolytic activation and delipidation of ATG8. Required for selective autophagic degradation of the nucleus (nucleophagy) as well as for mitophagy which contributes to regulate mitochondrial quantity and quality by eliminating the mitochondria to a basal level to fulfill cellular energy requirements and preventing excess ROS production. The protease activity is required for proteolytic activation of ATG8: cleaves the C-terminal amino acid of ATG8 to reveal a C-terminal glycine. ATG8 ubiquitin-like activity requires the exposure of the glycine at the C-terminus for its conjugation to phosphatidylethanolamine (PE) and its insertion to membranes, which is necessary for autophagy. The ATG8-PE conjugate mediates tethering between adjacent membranes and stimulates membrane hemifusion, leading to expansion of the autophagosomal membrane during autophagy. In addition to the protease activity, also catalyzes deconjugation of PE-conjugated forms of ATG8 during macroautophagy: ATG8 delipidation is required to release the protein from membranes, which facilitates multiple events during macroautophagy, and especially for efficient autophagosome biogenesis, the assembly of ATG9-containing tubulovesicular clusters into phagophores/autophagosomes, and for the disassembly of PAS-associated ATG components. ATG8 delipidation by ATG4 also recycles ATG8-PE generated on inappropriate membranes to maintain a reservoir of unlipidated ATG8 that is required for autophagosome formation at the PAS. This chain is Cysteine protease ATG4 (ATG4), found in Pyricularia oryzae (strain 70-15 / ATCC MYA-4617 / FGSC 8958) (Rice blast fungus).